Consider the following 369-residue polypeptide: Peptide chain release factor 2 (369 aa).

N5-methylglutamine is present on Q251.

Belongs to the prokaryotic/mitochondrial release factor family. Methylated by PrmC. Methylation increases the termination efficiency of RF2.

It localises to the cytoplasm. Functionally, peptide chain release factor 2 directs the termination of translation in response to the peptide chain termination codons UGA and UAA. The polypeptide is Peptide chain release factor 2 (prfB) (Chlamydia pneumoniae (Chlamydophila pneumoniae)).